We begin with the raw amino-acid sequence, 198 residues long: Nucleoid occlusion factor SlmA (198 aa).

The 62-residue stretch at 9–70 (RNRREEILQA…SLIEFIEDSL (62 aa)) folds into the HTH tetR-type domain. The H-T-H motif DNA-binding region spans 33–52 (TTAKLAANVGVSEAALYRHF). The stretch at 119–144 (DRLQGRINQLFERIEVQLRQVLREKK) forms a coiled coil.

The protein belongs to the nucleoid occlusion factor SlmA family. Homodimer. Interacts with FtsZ.

The protein localises to the cytoplasm. It is found in the nucleoid. In terms of biological role, required for nucleoid occlusion (NO) phenomenon, which prevents Z-ring formation and cell division over the nucleoid. Acts as a DNA-associated cell division inhibitor that binds simultaneously chromosomal DNA and FtsZ, and disrupts the assembly of FtsZ polymers. SlmA-DNA-binding sequences (SBS) are dispersed on non-Ter regions of the chromosome, preventing FtsZ polymerization at these regions. This chain is Nucleoid occlusion factor SlmA, found in Yersinia enterocolitica serotype O:8 / biotype 1B (strain NCTC 13174 / 8081).